Reading from the N-terminus, the 75-residue chain is Conotoxin VnMKLT2-012 (75 aa).

The signal sequence occupies residues 1–23 (MMKLTCVLIIAVLFLTACQLTTA). A propeptide spanning residues 24–45 (ETRDEYRAVRSSDEVRNSRSTR) is cleaved from the precursor. A compositionally biased stretch (basic and acidic residues) spans 31-45 (AVRSSDEVRNSRSTR). Positions 31-50 (AVRSSDEVRNSRSTRDCSGS) are disordered. Cystine bridges form between Cys-47/Cys-60, Cys-54/Cys-65, and Cys-59/Cys-74.

This sequence belongs to the conotoxin O1 superfamily. Expressed by the venom duct.

The protein localises to the secreted. The chain is Conotoxin VnMKLT2-012 from Conus ventricosus (Mediterranean cone).